We begin with the raw amino-acid sequence, 500 residues long: Probable malate:quinone oxidoreductase (500 aa).

This sequence belongs to the MQO family. FAD is required as a cofactor.

The enzyme catalyses (S)-malate + a quinone = a quinol + oxaloacetate. It functions in the pathway carbohydrate metabolism; tricarboxylic acid cycle; oxaloacetate from (S)-malate (quinone route): step 1/1. The chain is Probable malate:quinone oxidoreductase from Bacillus cereus (strain B4264).